Reading from the N-terminus, the 109-residue chain is Putative transporter-like protein YIL171W (109 aa).

The segment covering 1–22 (MSGVNNTSANDLSTTESNSNSA) has biased composition (polar residues). A disordered region spans residues 1–40 (MSGVNNTSANDLSTTESNSNSAVGAPSVKTEHGDSKDSLN). Topologically, residues 1–56 (MSGVNNTSANDLSTTESNSNSAVGAPSVKTEHGDSKDSLNLDATEAPIDLPQKPLS) are cytoplasmic. Residues 29–39 (KTEHGDSKDSL) are compositionally biased toward basic and acidic residues. A helical transmembrane segment spans residues 57 to 77 (AYTTVAILCLMIAFGGFIFGW). The Extracellular portion of the chain corresponds to 78 to 109 (DTGTISGFVNLSDFIRRFGQKKTTRGLTTYRK). Residue Asn-87 is glycosylated (N-linked (GlcNAc...) asparagine).

Belongs to the major facilitator superfamily. Sugar transporter (TC 2.A.1.1) family.

Its subcellular location is the cell membrane. Functionally, probable glucose transporter. This Saccharomyces cerevisiae (strain ATCC 204508 / S288c) (Baker's yeast) protein is Putative transporter-like protein YIL171W.